A 35-amino-acid polypeptide reads, in one-letter code: SECRWFMGGCDSTLDCCKHLSCKMGLYYCAWDGTF.

3 disulfides stabilise this stretch: Cys-3–Cys-17, Cys-10–Cys-22, and Cys-16–Cys-29. Position 35 is a phenylalanine amide (Phe-35).

This sequence belongs to the neurotoxin 10 (Hwtx-1) family. 62 (Vatx) subfamily. As to expression, expressed by the venom gland.

The protein resides in the secreted. Its function is as follows. Selectively activates mammalian TRPV1, the capsaicin receptor, a non-selective cation channel expressed by sensory neurons of the pain pathway. Is less potent than VaTx2 and VaTx3. Interacts with distinct regions of the channel than capsaicin, since it only acts on the extracellular face of the channel, and capsaicin binds to the cytosolic side. Also activates avian TRPV1, which is insensitive to capsaicin. Significantly inhibits potassium channels Kv2.1/KCNB1. This chain is Tau/kappa-theraphotoxin-Pc1a, found in Psalmopoeus cambridgei (Trinidad chevron tarantula).